A 901-amino-acid polypeptide reads, in one-letter code: Alanine--tRNA ligase (901 aa).

Zn(2+)-binding residues include H581, H585, C684, and H688.

Belongs to the class-II aminoacyl-tRNA synthetase family. Zn(2+) serves as cofactor.

Its subcellular location is the cytoplasm. It catalyses the reaction tRNA(Ala) + L-alanine + ATP = L-alanyl-tRNA(Ala) + AMP + diphosphate. Its function is as follows. Catalyzes the attachment of alanine to tRNA(Ala) in a two-step reaction: alanine is first activated by ATP to form Ala-AMP and then transferred to the acceptor end of tRNA(Ala). Also edits incorrectly charged Ser-tRNA(Ala) and Gly-tRNA(Ala) via its editing domain. The polypeptide is Alanine--tRNA ligase (Mycobacterium marinum (strain ATCC BAA-535 / M)).